Consider the following 48-residue polypeptide: uncharacterized protein (48 aa).

Residues 18–38 traverse the membrane as a helical segment; sequence IIIKYWYIDLTITIFAFLILY.

The protein resides in the host membrane. This is an uncharacterized protein from Acidianus bottle-shaped virus (isolate Italy/Pozzuoli) (ABV).